Here is a 341-residue protein sequence, read N- to C-terminus: Putative NADPH-dependent methylglyoxal reductase GRP2 (341 aa).

2 residues coordinate NADP(+): Lys40 and Tyr171.

It belongs to the NAD(P)-dependent epimerase/dehydratase family. Dihydroflavonol-4-reductase subfamily.

The protein resides in the cytoplasm. The enzyme catalyses (S)-lactaldehyde + NADP(+) = methylglyoxal + NADPH + H(+). In terms of biological role, catalyzes the irreversible reduction of the cytotoxic compound methylglyoxal (MG, 2-oxopropanal) to (S)-lactaldehyde. MG is synthesized via a bypath of glycolysis from dihydroxyacetone phosphate and is believed to play a role in cell cycle regulation and stress adaptation. The chain is Putative NADPH-dependent methylglyoxal reductase GRP2 (GRP2) from Candida albicans (strain SC5314 / ATCC MYA-2876) (Yeast).